Here is a 400-residue protein sequence, read N- to C-terminus: Argininosuccinate synthase (400 aa).

ATP-binding positions include 6–14 (AYSGGLDTS) and Ala-33. L-citrulline-binding residues include Tyr-84 and Ser-89. Position 114 (Gly-114) interacts with ATP. 3 residues coordinate L-aspartate: Thr-116, Asn-120, and Asp-121. Asn-120 lines the L-citrulline pocket. Positions 124, 173, 182, 258, and 270 each coordinate L-citrulline.

Belongs to the argininosuccinate synthase family. Type 1 subfamily. Homotetramer.

It localises to the cytoplasm. It catalyses the reaction L-citrulline + L-aspartate + ATP = 2-(N(omega)-L-arginino)succinate + AMP + diphosphate + H(+). Its pathway is amino-acid biosynthesis; L-arginine biosynthesis; L-arginine from L-ornithine and carbamoyl phosphate: step 2/3. The protein is Argininosuccinate synthase of Thermus thermophilus (strain ATCC 27634 / DSM 579 / HB8).